A 254-amino-acid polypeptide reads, in one-letter code: Alcohol dehydrogenase (254 aa).

10-33 (FVAGLGGIGLDTSREIVKSGPKNL) provides a ligand contact to NAD(+). Ser-138 contacts substrate. Tyr-151 (proton acceptor) is an active-site residue.

Belongs to the short-chain dehydrogenases/reductases (SDR) family. In terms of assembly, homodimer.

It catalyses the reaction a primary alcohol + NAD(+) = an aldehyde + NADH + H(+). It carries out the reaction a secondary alcohol + NAD(+) = a ketone + NADH + H(+). In Drosophila borealis (Fruit fly), this protein is Alcohol dehydrogenase (Adh).